A 178-amino-acid chain; its full sequence is Ribosome maturation factor RimP (178 aa).

It belongs to the RimP family.

The protein resides in the cytoplasm. Required for maturation of 30S ribosomal subunits. In Mycolicibacterium gilvum (strain PYR-GCK) (Mycobacterium gilvum (strain PYR-GCK)), this protein is Ribosome maturation factor RimP.